We begin with the raw amino-acid sequence, 143 residues long: Small ribosomal subunit protein uS11c (143 aa).

It belongs to the universal ribosomal protein uS11 family. In terms of assembly, part of the 30S ribosomal subunit.

The protein localises to the plastid. It is found in the chloroplast. This Oryza nivara (Indian wild rice) protein is Small ribosomal subunit protein uS11c.